A 459-amino-acid chain; its full sequence is Cysteine--tRNA ligase (459 aa).

A Zn(2+)-binding site is contributed by C28. The 'HIGH' region signature appears at 30–40 (MTVYDFCHLGH). Residues C209, H234, and E238 each contribute to the Zn(2+) site. The 'KMSKS' region motif lies at 266-270 (KMAKS). K269 serves as a coordination point for ATP. The tract at residues 440 to 459 (QARGIELEDTPEGTKWRRTR) is disordered.

Belongs to the class-I aminoacyl-tRNA synthetase family. Monomer. Zn(2+) serves as cofactor.

The protein localises to the cytoplasm. It carries out the reaction tRNA(Cys) + L-cysteine + ATP = L-cysteinyl-tRNA(Cys) + AMP + diphosphate. This Halorhodospira halophila (strain DSM 244 / SL1) (Ectothiorhodospira halophila (strain DSM 244 / SL1)) protein is Cysteine--tRNA ligase.